Consider the following 133-residue polypeptide: ATP synthase epsilon chain (133 aa).

The protein belongs to the ATPase epsilon chain family. F-type ATPases have 2 components, CF(1) - the catalytic core - and CF(0) - the membrane proton channel. CF(1) has five subunits: alpha(3), beta(3), gamma(1), delta(1), epsilon(1). CF(0) has three main subunits: a, b and c.

The protein localises to the cell membrane. In terms of biological role, produces ATP from ADP in the presence of a proton gradient across the membrane. In Mycoplasma pneumoniae (strain ATCC 29342 / M129 / Subtype 1) (Mycoplasmoides pneumoniae), this protein is ATP synthase epsilon chain (atpC).